The chain runs to 465 residues: Chromosomal replication initiator protein DnaA (465 aa).

The segment at 1–85 (MSGFWESCLQ…IALVIGSGKA (85 aa)) is domain I, interacts with DnaA modulators. A domain II region spans residues 85–129 (ATAARIQATTTDSGQNAPANPATTSEKRTAASEKARGKGSNYEKS). Over residues 93–108 (TTTDSGQNAPANPATT) the composition is skewed to polar residues. The disordered stretch occupies residues 93-125 (TTTDSGQNAPANPATTSEKRTAASEKARGKGSN). The span at 109–125 (SEKRTAASEKARGKGSN) shows a compositional bias: basic and acidic residues. The domain III, AAA+ region stretch occupies residues 130–346 (RLFPSFTFDN…GALKKVLAYS (217 aa)). Residues G174, G176, K177, and T178 each contribute to the ATP site. The domain IV, binds dsDNA stretch occupies residues 347-465 (SFHGRVIALD…LHVLLQVLKG (119 aa)).

Belongs to the DnaA family. In terms of assembly, oligomerizes as a right-handed, spiral filament on DNA at oriC.

The protein localises to the cytoplasm. Plays an essential role in the initiation and regulation of chromosomal replication. ATP-DnaA binds to the origin of replication (oriC) to initiate formation of the DNA replication initiation complex once per cell cycle. Binds the DnaA box (a 9 base pair repeat at the origin) and separates the double-stranded (ds)DNA. Forms a right-handed helical filament on oriC DNA; dsDNA binds to the exterior of the filament while single-stranded (ss)DNA is stabiized in the filament's interior. The ATP-DnaA-oriC complex binds and stabilizes one strand of the AT-rich DNA unwinding element (DUE), permitting loading of DNA polymerase. After initiation quickly degrades to an ADP-DnaA complex that is not apt for DNA replication. Binds acidic phospholipids. The sequence is that of Chromosomal replication initiator protein DnaA from Dechloromonas aromatica (strain RCB).